Reading from the N-terminus, the 546-residue chain is FAD-dependent monooxygenase (546 aa).

Residues 1–17 form the signal peptide; sequence MYDVIVVGAGWCGLAAA. Isoleucine 106 is an FAD binding site. N-linked (GlcNAc...) asparagine glycosylation is found at asparagine 239 and asparagine 343.

This sequence belongs to the FAD-binding monooxygenase family. It depends on FAD as a cofactor.

It functions in the pathway antifungal biosynthesis. Functionally, FAD-dependent monooxygenase; part of the gene cluster that mediates the biosynthesis of the tetrahydropyranyl antifungal agent lanomycin that acts as an inhibitor of CYP51 and blocks the ergosterol biosynthesis. The biosynthesis probably begins with the formation of an hexaketide, followed by methionine mediated alkylation of C-2 and C-6, and methylation of the reduced C-3 oxygen, pyran forming reductive ring closure, oxygenation of C-4, beta-keto reduction, enoyl reduction and dehydration of the remaining oxygens, and finally, acylation with glycine to complete the biosynthesis. The protein is FAD-dependent monooxygenase of Pyrenophora dematioidea (Helminthosporium dematioideum).